Reading from the N-terminus, the 442-residue chain is 26S proteasome non-ATPase regulatory subunit 12 homolog B (442 aa).

A coiled-coil region spans residues 1 to 129 (MEESRQLESS…KEEQGLIAEA (129 aa)). Positions 232 to 403 (EICRSYKAIY…GIICFQIVKD (172 aa)) constitute a PCI domain.

Belongs to the proteasome subunit p55 family. Component of the 19S regulatory particle (RP/PA700) lid subcomplex of the 26S proteasome. The 26S proteasome is composed of a core protease (CP), known as the 20S proteasome, capped at one or both ends by the 19S regulatory particle (RP/PA700). The RP/PA700 complex is composed of at least 17 different subunits in two subcomplexes, the base and the lid, which form the portions proximal and distal to the 20S proteolytic core, respectively. Ubiquitous with highest expression in flowers.

It is found in the cytoplasm. The protein resides in the nucleus. Acts as a regulatory subunit of the 26 proteasome which is involved in the ATP-dependent degradation of ubiquitinated proteins. Acts redundantly with RPN5A. The chain is 26S proteasome non-ATPase regulatory subunit 12 homolog B (RPN5B) from Arabidopsis thaliana (Mouse-ear cress).